The primary structure comprises 513 residues: MEEYEAQLLVVEQALENAADEAQRQDLLALKNNLQELLALTRDTGDEAHTDELPQQGDDLDDELQRLKSELSDLEAVGSSQTALDEERQLADLRTKYTAMVGEKCSAPHEHSWGTCYHNALICGVDDEVVMNSEGVLDARLRVLFTNPTHREMLPCSYYLEGECRFDETKCRFSHGALVPGSSIRKYNPPDFHKLSRSRPVFALLPDRLWHRGRVLCVNFVEQVCRVRLDGQDHKERERDFKFEELFPLTTDQDEDDELSSEESNSSMNDDSSDEAESDMDDLEEARRARMVELSLFTFKPTERLGAWEEFTRGIGSKLMEKMGYIHGTGLGSDGRGIVTPVSAQILPQGRSLDACMELREAANGDKDYFSVERKLKRAQRRQRKADEKAYVRESQRVDVFTFLNDSVLGPGESSQQGEQVAKKIKTNELQQHSTKTLNVETVRIADEIRRKQRDMAKVKQSLDRNSGDAQLQKRLQVQMESHKQELATLQAQERSLSKEQQTRKSKNKMFEF.

A C3H1-type zinc finger spans residues Pro155 to Leu178. Composition is skewed to acidic residues over residues Asp252 to Ser261 and Asp271 to Leu283. Positions Asp252–Leu283 are disordered. In terms of domain architecture, G-patch spans Thr312–Glu358. The span at Asp455 to Ser467 shows a compositional bias: basic and acidic residues. The disordered stretch occupies residues Asp455–Phe513. Polar residues predominate over residues Gly468–Met480. A compositionally biased stretch (basic and acidic residues) spans Ser496–Phe513.

The protein localises to the nucleus. In terms of biological role, transcription repressor. This chain is Zinc finger CCCH-type with G patch domain-containing protein, found in Drosophila yakuba (Fruit fly).